Consider the following 26-residue polypeptide: RVLEPGXEDPDVGEPAGEYEHHLLEX.

Acidic residues predominate over residues 1 to 12; that stretch reads RVLEPGXEDPDV. The interval 1-26 is disordered; that stretch reads RVLEPGXEDPDVGEPAGEYEHHLLEX. The residue at position 4 (glutamate 4) is a 4-carboxyglutamate. Residue proline 5 is modified to 4-hydroxyproline. A 4-carboxyglutamate modification is found at glutamate 8. Proline 10 is modified (4-hydroxyproline). Glutamate 14 is subject to 4-carboxyglutamate. A 4-hydroxyproline modification is found at proline 15. Glutamate 18, glutamate 20, and glutamate 25 each carry 4-carboxyglutamate.

In terms of tissue distribution, expressed by the venom duct.

Its subcellular location is the secreted. The polypeptide is Conotoxin reg6(gamma) (Conus regius (Crown cone)).